Consider the following 703-residue polypeptide: Polyribonucleotide nucleotidyltransferase (703 aa).

Residues Asp-488 and Asp-494 each contribute to the Mg(2+) site. Residues 555-614 (PKIVKMQINPDKIKDVIGPGGKIITKIIDETGVKIDIEQTGEVFISGIEIDMIKKAQELI) form the KH domain. An S1 motif domain is found at 624-692 (GKTYKGKVSR…EKGRVNLSRK (69 aa)).

Belongs to the polyribonucleotide nucleotidyltransferase family. Mg(2+) serves as cofactor.

The protein resides in the cytoplasm. The enzyme catalyses RNA(n+1) + phosphate = RNA(n) + a ribonucleoside 5'-diphosphate. Its function is as follows. Involved in mRNA degradation. Catalyzes the phosphorolysis of single-stranded polyribonucleotides processively in the 3'- to 5'-direction. In Clostridioides difficile (strain 630) (Peptoclostridium difficile), this protein is Polyribonucleotide nucleotidyltransferase.